The sequence spans 290 residues: N-acetylmannosamine kinase (290 aa).

ATP contacts are provided by residues 6–13 (ALDIGGTK) and 132–139 (GVGGGIIL). Zn(2+) contacts are provided by His156, Cys166, Cys168, and Cys173.

The protein belongs to the ROK (NagC/XylR) family. NanK subfamily. In terms of assembly, homodimer.

It carries out the reaction an N-acyl-D-mannosamine + ATP = an N-acyl-D-mannosamine 6-phosphate + ADP + H(+). It participates in amino-sugar metabolism; N-acetylneuraminate degradation; D-fructose 6-phosphate from N-acetylneuraminate: step 2/5. Catalyzes the phosphorylation of N-acetylmannosamine (ManNAc) to ManNAc-6-P. In Yersinia pseudotuberculosis serotype O:3 (strain YPIII), this protein is N-acetylmannosamine kinase.